The following is a 102-amino-acid chain: Small ribosomal subunit protein uS10 (102 aa).

Belongs to the universal ribosomal protein uS10 family. In terms of assembly, part of the 30S ribosomal subunit.

Its function is as follows. Involved in the binding of tRNA to the ribosomes. The sequence is that of Small ribosomal subunit protein uS10 from Paramagnetospirillum magneticum (strain ATCC 700264 / AMB-1) (Magnetospirillum magneticum).